The sequence spans 291 residues: ATP synthase subunit a (291 aa).

The next 7 helical transmembrane spans lie at 50-70, 108-128, 129-149, 161-181, 203-223, 241-261, and 262-282; these read LDSM…FWIV, IAPL…MDLI, PVDW…GMDP, DPNI…FYSI, PVAK…TFLA, LIFI…SVPW, and AIFH…LTIV.

The protein belongs to the ATPase A chain family. F-type ATPases have 2 components, CF(1) - the catalytic core - and CF(0) - the membrane proton channel. CF(1) has five subunits: alpha(3), beta(3), gamma(1), delta(1), epsilon(1). CF(0) has three main subunits: a(1), b(2) and c(9-12). The alpha and beta chains form an alternating ring which encloses part of the gamma chain. CF(1) is attached to CF(0) by a central stalk formed by the gamma and epsilon chains, while a peripheral stalk is formed by the delta and b chains.

The protein localises to the cell inner membrane. In terms of biological role, key component of the proton channel; it plays a direct role in the translocation of protons across the membrane. This chain is ATP synthase subunit a, found in Acinetobacter baumannii (strain AB307-0294).